The following is a 1593-amino-acid chain: Laminin subunit gamma-1 (1593 aa).

The N-terminal stretch at 1–19 (MSLFSCLLLWTLWAACSHG) is a signal peptide. The Laminin N-terminal domain occupies 30–269 (RPQRCMPEFV…AISDFAVGGR (240 aa)). Residues asparagine 44 and asparagine 118 are each glycosylated (N-linked (GlcNAc...) asparagine). 16 cysteine pairs are disulfide-bonded: cysteine 270-cysteine 279, cysteine 272-cysteine 289, cysteine 291-cysteine 300, cysteine 303-cysteine 323, cysteine 326-cysteine 335, cysteine 328-cysteine 351, cysteine 354-cysteine 363, cysteine 366-cysteine 379, cysteine 382-cysteine 394, cysteine 384-cysteine 400, cysteine 402-cysteine 411, cysteine 414-cysteine 426, cysteine 429-cysteine 440, cysteine 431-cysteine 447, cysteine 449-cysteine 458, and cysteine 461-cysteine 476. 4 Laminin EGF-like domains span residues 270 to 325 (CKCN…ECLP), 326 to 381 (CNCN…RCLS), 382 to 428 (CGCN…GCRP), and 429 to 478 (CSCN…GCTP). The 169-residue stretch at 505–673 (RDDEGWKGKQ…PGTPARWVEK (169 aa)) folds into the Laminin IV type A domain. N-linked (GlcNAc...) asparagine glycosylation is found at asparagine 560, asparagine 634, and asparagine 654. Disulfide bonds link cysteine 708–cysteine 717, cysteine 710–cysteine 724, cysteine 726–cysteine 735, cysteine 738–cysteine 754, cysteine 757–cysteine 765, cysteine 759–cysteine 776, cysteine 779–cysteine 788, cysteine 791–cysteine 809, cysteine 812–cysteine 826, cysteine 814–cysteine 833, cysteine 836–cysteine 845, cysteine 848–cysteine 865, cysteine 868–cysteine 882, cysteine 870–cysteine 889, cysteine 891–cysteine 900, cysteine 903–cysteine 916, cysteine 919–cysteine 931, cysteine 921–cysteine 938, cysteine 940–cysteine 949, cysteine 952–cysteine 964, cysteine 967–cysteine 979, cysteine 969–cysteine 985, cysteine 987–cysteine 996, and cysteine 999–cysteine 1012. Laminin EGF-like domains follow at residues 708–756 (CNCN…DCKA), 757–811 (CPCP…ACRA), 812–867 (CSCN…KCKP), 868–918 (CKCS…GCER), 919–966 (CNCN…GCKP), and 967–1014 (CDCD…GCQQ). N-linked (GlcNAc...) asparagine glycans are attached at residues asparagine 1006, asparagine 1091, asparagine 1159, asparagine 1189, asparagine 1207, asparagine 1254, asparagine 1364, and asparagine 1379. The segment at 1014-1593 (QCPNCYSLVR…CFNTPSLERP (580 aa)) is domain II and I. Positions 1021-1580 (LVRDKVNQQR…ANLNDIKNTL (560 aa)) form a coiled coil.

As to quaternary structure, laminin is a complex glycoprotein, consisting of three different polypeptide chains (alpha, beta, gamma), which are bound to each other by disulfide bonds into a cross-shaped molecule comprising one long and three short arms with globules at each end.

It is found in the secreted. It localises to the extracellular space. The protein resides in the extracellular matrix. Its subcellular location is the basement membrane. Binding to cells via a high affinity receptor, laminin is thought to mediate the attachment, migration and organization of cells into tissues during embryonic development by interacting with other extracellular matrix components. In Danio rerio (Zebrafish), this protein is Laminin subunit gamma-1 (lamc1).